Here is a 182-residue protein sequence, read N- to C-terminus: Adenine phosphoribosyltransferase (182 aa).

It belongs to the purine/pyrimidine phosphoribosyltransferase family. In terms of assembly, homodimer.

The protein resides in the cytoplasm. The enzyme catalyses AMP + diphosphate = 5-phospho-alpha-D-ribose 1-diphosphate + adenine. Its pathway is purine metabolism; AMP biosynthesis via salvage pathway; AMP from adenine: step 1/1. Catalyzes a salvage reaction resulting in the formation of AMP, that is energically less costly than de novo synthesis. In Streptomyces avermitilis (strain ATCC 31267 / DSM 46492 / JCM 5070 / NBRC 14893 / NCIMB 12804 / NRRL 8165 / MA-4680), this protein is Adenine phosphoribosyltransferase.